The sequence spans 404 residues: Voltage-gated potassium channel subunit beta-3 (404 aa).

Positions 1–14 (MQVSIACTEQNLRS) are enriched in polar residues. The interval 1–77 (MQVSIACTEQ…LRESTGRGTG (77 aa)) is disordered. The span at 28-50 (PGGGNGGPAGGGHGNPPGGGGSG) shows a compositional bias: gly residues. NADP(+)-binding residues include Thr97, Trp98, Gln104, and Asp126. The active-site Proton donor/acceptor is Tyr131. NADP(+) contacts are provided by Asn199, Ser229, Arg230, Gln255, Trp284, Pro286, Leu287, Ala288, Cys289, Lys295, Arg305, Gly364, Ser366, Gln370, and Glu373.

Belongs to the shaker potassium channel beta subunit family. As to quaternary structure, forms heteromultimeric complex with alpha subunits. Interacts with KCNA5 and KCNB2. In terms of tissue distribution, brain specific. Most prominent expression in cerebellum. Weaker signals detected in cortex, occipital lobe, frontal lobe and temporal lobe. Not detected in spinal cord, heart, lung, liver, kidney, pancreas, placenta and skeletal muscle.

It localises to the cytoplasm. Functionally, regulatory subunit of the voltage-gated potassium (Kv) channels composed of pore-forming and potassium-conducting alpha subunits and of regulatory beta subunit. The beta-3/KCNAB3 subunit may mediate closure of potassium channels. Increases inactivation of Kv1.5/KCNA5 alpha subunit-containing channels. May display nicotinamide adenine dinucleotide phosphate (NADPH)-dependent aldoketoreductase activity. The binding of oxidized and reduced NADP(H) cofactors may be required for the regulation of potassium channel activity. This Homo sapiens (Human) protein is Voltage-gated potassium channel subunit beta-3.